We begin with the raw amino-acid sequence, 174 residues long: Caltractin ICL1e (174 aa).

The segment at 1–33 is disordered; it reads MSKKQQAPVAQKPVGKQQQVNRKPQDRPGLTED. EF-hand domains follow at residues 33-68, 88-103, 105-140, and 141-174; these read DEIEEIKEAFNLFDTEGTGRVDPRELKAAMQSLGFD, IDFDQFLDAITSKLGN, ESRDGINKIFDLFDDDGSNSINLNNLKRVSKELGET, and MTAEELAEMLERAASNGRDISREDFYNIMVKRTF.

This sequence belongs to the centrin family. As to quaternary structure, monomer.

The protein localises to the cytoplasm. Its subcellular location is the cytoskeleton. Plays a fundamental role in microtubule organizing center structure and function. Component of the infraciliary lattice (ICL) and the ciliary basal bodies. In Paramecium tetraurelia, this protein is Caltractin ICL1e (Icl1e).